Consider the following 910-residue polypeptide: MEAKVEEKEPEPVENAGPDAPVRLTPMMEQYIEIKAANVDSLLFYRMGDFYELFFDDAVAASAALGITLTKRGKHLGEDIPMCGVPVHAADDYLQKLIAKGYRVAVCEQVEDPAEAKKRGSKSVVKRDVIRLVTPGTLTEEKLLDPAQANFLMAMGRTRGDGALALVWIDISTGTFRVAETTPDRLFADIMRVDPRELVVADSAFHDEELRPVFDLIGKAVTPQPATLFDSAAAQTRIQHYFNVATLDGFGQFSRPELSAISGAIAYIEKTQISERPPLMRPEREHEGGTLFIDPATRASLELARTMSGNRDGSLLKAIDRTVTGGGARLLAERLTAPLTSPKEIALRLDSVSWCLSEQTLCEALRLELKGVPDMPRALSRLAVGRGGPRDLGALACGFEAAGGIASLLDGALLPDELAAAREAIEKMPAGFAAHLDRALADELPLLKRDGGFVREGYNSELDEMRALRDQSRRVIAGLQADYIEETGIKSLKIKHNNVLGYFIEVTANNSGAMTDTDEAKSRFIHRQTMANAMRFTTTELAELESKIANAADRALSIELAIFEELTAEAVAHADSIRAAASALSVFDVSTALAVLAEEQGYCRPHVDDSLSFNIVAGRHPVVEQALRRQAANPFVANDCDLSPQRDGGDGAIWLLTGPNMGGKSTFLRQNALIAILAQMGSFVPAGSAHIGVVDRLFSRVGASDDLARGRSTFMVEMVETAAILNQAGEHSLVILDEIGRGTATFDGLSIAWAAVEYLHEKNRCRALFATHFHEMTALSEKLERLSNVTMRVKEWDNDVIFLHEVAKGAADRSYGVQVARLAGLPEAVVNRARDVLHQLEAGETSGKADRLIDDLPLFSVMLQQEKPKPQIQAKDSELANAVAAISPDELTPREALDLIYKLKELAGKA.

The segment covering 1–11 (MEAKVEEKEPE) has biased composition (basic and acidic residues). Residues 1-21 (MEAKVEEKEPEPVENAGPDAP) form a disordered region. Residue 658–665 (GPNMGGKS) coordinates ATP.

The protein belongs to the DNA mismatch repair MutS family.

Its function is as follows. This protein is involved in the repair of mismatches in DNA. It is possible that it carries out the mismatch recognition step. This protein has a weak ATPase activity. The protein is DNA mismatch repair protein MutS of Brucella abortus (strain 2308).